We begin with the raw amino-acid sequence, 91 residues long: DNA-directed RNA polymerase subunit omega (91 aa).

The protein belongs to the RNA polymerase subunit omega family. In terms of assembly, the RNAP catalytic core consists of 2 alpha, 1 beta, 1 beta' and 1 omega subunit. When a sigma factor is associated with the core the holoenzyme is formed, which can initiate transcription.

The enzyme catalyses RNA(n) + a ribonucleoside 5'-triphosphate = RNA(n+1) + diphosphate. In terms of biological role, promotes RNA polymerase assembly. Latches the N- and C-terminal regions of the beta' subunit thereby facilitating its interaction with the beta and alpha subunits. The sequence is that of DNA-directed RNA polymerase subunit omega from Sodalis glossinidius (strain morsitans).